Here is a 337-residue protein sequence, read N- to C-terminus: Pantothenate synthetase (337 aa).

31-38 (MGALHEGH) contributes to the ATP binding site. H38 (proton donor) is an active-site residue. (R)-pantoate is bound at residue Q65. Q65 provides a ligand contact to beta-alanine. Position 152 to 155 (152 to 155 (GQKD)) interacts with ATP. Q158 contributes to the (R)-pantoate binding site. Residues V181 and 189–192 (LSSR) each bind ATP.

Belongs to the pantothenate synthetase family. In terms of assembly, homodimer.

It is found in the cytoplasm. The catalysed reaction is (R)-pantoate + beta-alanine + ATP = (R)-pantothenate + AMP + diphosphate + H(+). It participates in cofactor biosynthesis; (R)-pantothenate biosynthesis; (R)-pantothenate from (R)-pantoate and beta-alanine: step 1/1. Its function is as follows. Catalyzes the condensation of pantoate with beta-alanine in an ATP-dependent reaction via a pantoyl-adenylate intermediate. This Streptomyces coelicolor (strain ATCC BAA-471 / A3(2) / M145) protein is Pantothenate synthetase.